The chain runs to 211 residues: Large ribosomal subunit protein uL3 (211 aa).

Position 151 is an N5-methylglutamine (Q151).

The protein belongs to the universal ribosomal protein uL3 family. As to quaternary structure, part of the 50S ribosomal subunit. Forms a cluster with proteins L14 and L19. Post-translationally, methylated by PrmB.

One of the primary rRNA binding proteins, it binds directly near the 3'-end of the 23S rRNA, where it nucleates assembly of the 50S subunit. The chain is Large ribosomal subunit protein uL3 from Francisella tularensis subsp. tularensis (strain FSC 198).